We begin with the raw amino-acid sequence, 190 residues long: Potassium-transporting ATPase KdpC subunit (190 aa).

A helical membrane pass occupies residues 6–26 (PAVFLVLLLTLITGLLYPLLT). The interval 67–88 (GRPSATSDRPYNPLASSGSNLA) is disordered. Positions 69–88 (PSATSDRPYNPLASSGSNLA) are enriched in polar residues.

It belongs to the KdpC family. As to quaternary structure, the system is composed of three essential subunits: KdpA, KdpB and KdpC.

The protein resides in the cell inner membrane. Its function is as follows. Part of the high-affinity ATP-driven potassium transport (or Kdp) system, which catalyzes the hydrolysis of ATP coupled with the electrogenic transport of potassium into the cytoplasm. This subunit acts as a catalytic chaperone that increases the ATP-binding affinity of the ATP-hydrolyzing subunit KdpB by the formation of a transient KdpB/KdpC/ATP ternary complex. In Erwinia tasmaniensis (strain DSM 17950 / CFBP 7177 / CIP 109463 / NCPPB 4357 / Et1/99), this protein is Potassium-transporting ATPase KdpC subunit.